The sequence spans 291 residues: NAD kinase (291 aa).

D73 (proton acceptor) is an active-site residue. Residues 73 to 74, 147 to 148, R175, D177, and Q246 contribute to the NAD(+) site; these read DG and ND.

The protein belongs to the NAD kinase family. The cofactor is a divalent metal cation.

Its subcellular location is the cytoplasm. It carries out the reaction NAD(+) + ATP = ADP + NADP(+) + H(+). In terms of biological role, involved in the regulation of the intracellular balance of NAD and NADP, and is a key enzyme in the biosynthesis of NADP. Catalyzes specifically the phosphorylation on 2'-hydroxyl of the adenosine moiety of NAD to yield NADP. The chain is NAD kinase from Laribacter hongkongensis (strain HLHK9).